We begin with the raw amino-acid sequence, 304 residues long: Prephenate dehydratase (304 aa).

The Prephenate dehydratase domain occupies 3-178 (RIAYFGPVGT…ARTRFLLMRR (176 aa)). Residues 193–271 (SIVAAAANRT…DVRFLGSFAR (79 aa)) enclose the ACT domain.

The enzyme catalyses prephenate + H(+) = 3-phenylpyruvate + CO2 + H2O. It participates in amino-acid biosynthesis; L-phenylalanine biosynthesis; phenylpyruvate from prephenate: step 1/1. This is Prephenate dehydratase (pheA) from Amycolatopsis methanolica.